A 247-amino-acid chain; its full sequence is Enolase-phosphatase E1 (247 aa).

The protein belongs to the HAD-like hydrolase superfamily. MasA/MtnC family. As to quaternary structure, monomer. The cofactor is Mg(2+).

The catalysed reaction is 5-methylsulfanyl-2,3-dioxopentyl phosphate + H2O = 1,2-dihydroxy-5-(methylsulfanyl)pent-1-en-3-one + phosphate. It functions in the pathway amino-acid biosynthesis; L-methionine biosynthesis via salvage pathway; L-methionine from S-methyl-5-thio-alpha-D-ribose 1-phosphate: step 3/6. It participates in amino-acid biosynthesis; L-methionine biosynthesis via salvage pathway; L-methionine from S-methyl-5-thio-alpha-D-ribose 1-phosphate: step 4/6. Bifunctional enzyme that catalyzes the enolization of 2,3-diketo-5-methylthiopentyl-1-phosphate (DK-MTP-1-P) into the intermediate 2-hydroxy-3-keto-5-methylthiopentenyl-1-phosphate (HK-MTPenyl-1-P), which is then dephosphorylated to form the acireductone 1,2-dihydroxy-3-keto-5-methylthiopentene (DHK-MTPene). In Leptospira biflexa serovar Patoc (strain Patoc 1 / Ames), this protein is Enolase-phosphatase E1.